Reading from the N-terminus, the 217-residue chain is uncharacterized protein (217 aa).

Positions 14-217 (LAVNNLCIER…NELATEIISL (204 aa)) constitute an ABC transporter domain. ATP is bound at residue 46–53 (GEIGSGKT).

This sequence belongs to the ABC transporter superfamily.

This is an uncharacterized protein from Haemophilus influenzae (strain ATCC 51907 / DSM 11121 / KW20 / Rd).